The primary structure comprises 440 residues: Xylose isomerase (440 aa).

The Mg(2+) site is built by Asp307 and Asp309.

This sequence belongs to the xylose isomerase family. In terms of assembly, homotetramer. Requires Mg(2+) as cofactor.

The protein resides in the cytoplasm. The enzyme catalyses alpha-D-xylose = alpha-D-xylulofuranose. This chain is Xylose isomerase, found in Escherichia coli (strain K12 / MC4100 / BW2952).